A 182-amino-acid polypeptide reads, in one-letter code: Small ribosomal subunit protein uS4c (182 aa).

An S4 RNA-binding domain is found at 82–143 (MRLDNILFRL…KERSKVLIQN (62 aa)).

The protein belongs to the universal ribosomal protein uS4 family. As to quaternary structure, part of the 30S ribosomal subunit. Contacts protein S5. The interaction surface between S4 and S5 is involved in control of translational fidelity.

The protein localises to the plastid. It is found in the chloroplast. One of the primary rRNA binding proteins, it binds directly to 16S rRNA where it nucleates assembly of the body of the 30S subunit. Its function is as follows. With S5 and S12 plays an important role in translational accuracy. In Neomarica sp. (strain Lejeune 1997), this protein is Small ribosomal subunit protein uS4c (rps4).